We begin with the raw amino-acid sequence, 122 residues long: Truncated CrmB protein (122 aa).

Functionally, the protein is truncated in this strain and presumably inactive. It has similarities with variola virus CrmB, but the product is inactivated due to several premature stop codons. In Bos taurus (Bovine), this protein is Truncated CrmB protein (OPG002).